Reading from the N-terminus, the 249-residue chain is MAGHSKWANTKHRKAKQDASRAKVFTKYIREIVTAAKLGGADAASNPRLRAVVEKALSVNMTRDAINRAIQRGAGGEDNDDLNEVTYEGYGVGGVAVLVETMTDNLNRTVPDVRHCFSKTNGNLGTNGSVSYLFTKRGEISFEDVSLEDKIMDVALEAGADDIEIEEDGILVITSPESFGDVQDALTAAGLKSDNAEVVMSPSTKAEITDIEQAKQIMKMIDMLEDLDDVQNVYTNVEFSEEVLAQLDA.

Belongs to the TACO1 family.

Its subcellular location is the cytoplasm. This is Probable transcriptional regulatory protein ACIAD2052 from Acinetobacter baylyi (strain ATCC 33305 / BD413 / ADP1).